The sequence spans 96 residues: Co-chaperonin GroES (96 aa).

This sequence belongs to the GroES chaperonin family. In terms of assembly, heptamer of 7 subunits arranged in a ring. Interacts with the chaperonin GroEL.

The protein resides in the cytoplasm. Together with the chaperonin GroEL, plays an essential role in assisting protein folding. The GroEL-GroES system forms a nano-cage that allows encapsulation of the non-native substrate proteins and provides a physical environment optimized to promote and accelerate protein folding. GroES binds to the apical surface of the GroEL ring, thereby capping the opening of the GroEL channel. In Paraburkholderia phytofirmans (strain DSM 17436 / LMG 22146 / PsJN) (Burkholderia phytofirmans), this protein is Co-chaperonin GroES.